Here is a 200-residue protein sequence, read N- to C-terminus: Serine/threonine-protein kinase mos (200 aa).

The Protein kinase domain occupies 2–200 (LCLLQPLGSG…ELLKGERVTA (199 aa)). ATP is bound by residues 8–16 (LGSGGFGSV) and K29. The active-site Proton acceptor is D143.

The protein belongs to the protein kinase superfamily. Ser/Thr protein kinase family.

It catalyses the reaction L-seryl-[protein] + ATP = O-phospho-L-seryl-[protein] + ADP + H(+). It carries out the reaction L-threonyl-[protein] + ATP = O-phospho-L-threonyl-[protein] + ADP + H(+). The sequence is that of Serine/threonine-protein kinase mos (MOS) from Nycticorax nycticorax (Black-crowned night-heron).